A 207-amino-acid polypeptide reads, in one-letter code: Putative 3-methyladenine DNA glycosylase (207 aa).

This sequence belongs to the DNA glycosylase MPG family.

This Listeria monocytogenes serotype 4a (strain HCC23) protein is Putative 3-methyladenine DNA glycosylase.